A 356-amino-acid chain; its full sequence is 5-formaminoimidazole-4-carboxamide-1-(beta)-D-ribofuranosyl 5'-monophosphate synthetase 1 (356 aa).

The 5-amino-1-(5-phospho-beta-D-ribosyl)imidazole-4-carboxamide site is built by His27 and Ser94. An ATP-grasp domain is found at Thr101 to Ser333. ATP is bound by residues Pro145–Tyr196 and Glu226. Residue Asn255 participates in 5-amino-1-(5-phospho-beta-D-ribosyl)imidazole-4-carboxamide binding. Residues Glu293 and Glu306 each contribute to the Mg(2+) site.

The protein belongs to the phosphohexose mutase family. The cofactor is Mg(2+). Requires Mn(2+) as cofactor.

It catalyses the reaction 5-amino-1-(5-phospho-beta-D-ribosyl)imidazole-4-carboxamide + formate + ATP = 5-formamido-1-(5-phospho-D-ribosyl)imidazole-4-carboxamide + ADP + phosphate. It functions in the pathway purine metabolism; IMP biosynthesis via de novo pathway; 5-formamido-1-(5-phospho-D-ribosyl)imidazole-4-carboxamide from 5-amino-1-(5-phospho-D-ribosyl)imidazole-4-carboxamide (formate route): step 1/1. Catalyzes the ATP- and formate-dependent formylation of 5-aminoimidazole-4-carboxamide-1-beta-d-ribofuranosyl 5'-monophosphate (AICAR) to 5-formaminoimidazole-4-carboxamide-1-beta-d-ribofuranosyl 5'-monophosphate (FAICAR) in the absence of folates. The chain is 5-formaminoimidazole-4-carboxamide-1-(beta)-D-ribofuranosyl 5'-monophosphate synthetase 1 from Methanosarcina mazei (strain ATCC BAA-159 / DSM 3647 / Goe1 / Go1 / JCM 11833 / OCM 88) (Methanosarcina frisia).